We begin with the raw amino-acid sequence, 353 residues long: Photosystem II protein D1 (353 aa).

Residue T2 is modified to N-acetylthreonine. Phosphothreonine is present on T2. The next 3 helical transmembrane spans lie at 29–46, 118–133, and 142–156; these read YIGWFGVLMIPTLLTATS, HFLLGVACYMGREWEL, and WIAVAYSAPVAAATA. Position 118 (H118) interacts with chlorophyll a. Residue Y126 participates in pheophytin a binding. Residues D170 and E189 each contribute to the [CaMn4O5] cluster site. Residues 197-218 traverse the membrane as a helical segment; it reads FHMLGVAGVFGGSLFSAMHGSL. Chlorophyll a is bound at residue H198. Residues H215 and 264–265 contribute to the a quinone site; that span reads SF. A Fe cation-binding site is contributed by H215. H272 provides a ligand contact to Fe cation. The helical transmembrane segment at 274 to 288 threads the bilayer; the sequence is FLAAWPVIGIWFTAL. [CaMn4O5] cluster is bound by residues H332, E333, D342, and A344. Residues 345–353 constitute a propeptide that is removed on maturation; it reads AIEAPSTNG.

This sequence belongs to the reaction center PufL/M/PsbA/D family. In terms of assembly, PSII is composed of 1 copy each of membrane proteins PsbA, PsbB, PsbC, PsbD, PsbE, PsbF, PsbH, PsbI, PsbJ, PsbK, PsbL, PsbM, PsbT, PsbX, PsbY, PsbZ, Psb30/Ycf12, at least 3 peripheral proteins of the oxygen-evolving complex and a large number of cofactors. It forms dimeric complexes. It depends on The D1/D2 heterodimer binds P680, chlorophylls that are the primary electron donor of PSII, and subsequent electron acceptors. It shares a non-heme iron and each subunit binds pheophytin, quinone, additional chlorophylls, carotenoids and lipids. D1 provides most of the ligands for the Mn4-Ca-O5 cluster of the oxygen-evolving complex (OEC). There is also a Cl(-1) ion associated with D1 and D2, which is required for oxygen evolution. The PSII complex binds additional chlorophylls, carotenoids and specific lipids. as a cofactor. Post-translationally, tyr-161 forms a radical intermediate that is referred to as redox-active TyrZ, YZ or Y-Z. In terms of processing, C-terminally processed by CTPA; processing is essential to allow assembly of the oxygen-evolving complex and thus photosynthetic growth.

It is found in the plastid. The protein resides in the chloroplast thylakoid membrane. It carries out the reaction 2 a plastoquinone + 4 hnu + 2 H2O = 2 a plastoquinol + O2. Functionally, photosystem II (PSII) is a light-driven water:plastoquinone oxidoreductase that uses light energy to abstract electrons from H(2)O, generating O(2) and a proton gradient subsequently used for ATP formation. It consists of a core antenna complex that captures photons, and an electron transfer chain that converts photonic excitation into a charge separation. The D1/D2 (PsbA/PsbD) reaction center heterodimer binds P680, the primary electron donor of PSII as well as several subsequent electron acceptors. The chain is Photosystem II protein D1 from Amaranthus hybridus (Slim amaranth).